A 268-amino-acid chain; its full sequence is Endonuclease 8 1 (268 aa).

Pro-2 (schiff-base intermediate with DNA) is an active-site residue. The active-site Proton donor is Glu-3. Lys-52 (proton donor; for beta-elimination activity) is an active-site residue. 2 residues coordinate DNA: Arg-125 and Asn-166. An FPG-type zinc finger spans residues 234–268; the sequence is YVYRRAGEPCRVCGGVIRTALLEGRNVFWCPVCQT. Arg-258 serves as the catalytic Proton donor; for delta-elimination activity.

It belongs to the FPG family. Requires Zn(2+) as cofactor.

The enzyme catalyses 2'-deoxyribonucleotide-(2'-deoxyribose 5'-phosphate)-2'-deoxyribonucleotide-DNA = a 3'-end 2'-deoxyribonucleotide-(2,3-dehydro-2,3-deoxyribose 5'-phosphate)-DNA + a 5'-end 5'-phospho-2'-deoxyribonucleoside-DNA + H(+). Functionally, involved in base excision repair of DNA damaged by oxidation or by mutagenic agents. Acts as a DNA glycosylase that recognizes and removes damaged bases. Has AP (apurinic/apyrimidinic) lyase activity and introduces nicks in the DNA strand. Cleaves the DNA backbone by beta-delta elimination to generate a single-strand break at the site of the removed base with both 3'- and 5'-phosphates. In Mycobacterium bovis (strain ATCC BAA-935 / AF2122/97), this protein is Endonuclease 8 1 (nei1).